The sequence spans 236 residues: 2-C-methyl-D-erythritol 4-phosphate cytidylyltransferase (236 aa).

Belongs to the IspD/TarI cytidylyltransferase family. IspD subfamily.

It catalyses the reaction 2-C-methyl-D-erythritol 4-phosphate + CTP + H(+) = 4-CDP-2-C-methyl-D-erythritol + diphosphate. It functions in the pathway isoprenoid biosynthesis; isopentenyl diphosphate biosynthesis via DXP pathway; isopentenyl diphosphate from 1-deoxy-D-xylulose 5-phosphate: step 2/6. Catalyzes the formation of 4-diphosphocytidyl-2-C-methyl-D-erythritol from CTP and 2-C-methyl-D-erythritol 4-phosphate (MEP). This chain is 2-C-methyl-D-erythritol 4-phosphate cytidylyltransferase, found in Pseudomonas syringae pv. tomato (strain ATCC BAA-871 / DC3000).